The sequence spans 458 residues: Fumarate hydratase class II 2 (458 aa).

Substrate is bound by residues 98–100, 123–126, 133–135, and Thr-181; these read SGT, NPND, and SSN. The Proton donor/acceptor role is filled by His-182. The active site involves Ser-312. Substrate is bound by residues Ser-313 and 318-320; that span reads KVN.

This sequence belongs to the class-II fumarase/aspartase family. Fumarase subfamily. In terms of assembly, homotetramer.

The protein localises to the cytoplasm. It catalyses the reaction (S)-malate = fumarate + H2O. It functions in the pathway carbohydrate metabolism; tricarboxylic acid cycle; (S)-malate from fumarate: step 1/1. Its function is as follows. Involved in the TCA cycle. Catalyzes the stereospecific interconversion of fumarate to L-malate. The chain is Fumarate hydratase class II 2 from Pseudomonas aeruginosa (strain ATCC 15692 / DSM 22644 / CIP 104116 / JCM 14847 / LMG 12228 / 1C / PRS 101 / PAO1).